The chain runs to 396 residues: Elongation factor Tu (396 aa).

Residues 10–205 (KPHVNIGTIG…ACDDNIPDPV (196 aa)) enclose the tr-type G domain. Residues 19-26 (GHVDHGKT) are G1. Residue 19 to 26 (GHVDHGKT) coordinates GTP. Threonine 26 contributes to the Mg(2+) binding site. Residues 62 to 66 (GITIN) form a G2 region. The G3 stretch occupies residues 83–86 (DAPG). Residues 83–87 (DAPGH) and 138–141 (NKCD) each bind GTP. A G4 region spans residues 138–141 (NKCD). The interval 175–177 (SAL) is G5.

It belongs to the TRAFAC class translation factor GTPase superfamily. Classic translation factor GTPase family. EF-Tu/EF-1A subfamily. In terms of assembly, monomer.

It is found in the cytoplasm. The enzyme catalyses GTP + H2O = GDP + phosphate + H(+). Its function is as follows. GTP hydrolase that promotes the GTP-dependent binding of aminoacyl-tRNA to the A-site of ribosomes during protein biosynthesis. The chain is Elongation factor Tu from Corynebacterium glutamicum (strain R).